Consider the following 361-residue polypeptide: 3-dehydroquinate synthase (361 aa).

This sequence belongs to the archaeal-type DHQ synthase family.

It carries out the reaction 2-amino-2,3,7-trideoxy-D-lyxo-hept-6-ulosonate + NAD(+) + H2O = 3-dehydroquinate + NH4(+) + NADH + H(+). In terms of biological role, catalyzes the oxidative deamination and cyclization of 2-amino-3,7-dideoxy-D-threo-hept-6-ulosonic acid (ADH) to yield 3-dehydroquinate (DHQ), which is fed into the canonical shikimic pathway of aromatic amino acid biosynthesis. This chain is 3-dehydroquinate synthase, found in Methanococcus maripaludis (strain C5 / ATCC BAA-1333).